Consider the following 127-residue polypeptide: Large ribosomal subunit protein eL24 (127 aa).

Residues 93 to 127 (KRAQKPEVKQAAAEQAKREIKEKKKAAAKKAAPKK) are disordered. A compositionally biased stretch (basic residues) spans 115–127 (KKKAAAKKAAPKK).

This sequence belongs to the eukaryotic ribosomal protein eL24 family.

The polypeptide is Large ribosomal subunit protein eL24 (rpl24) (Dictyostelium discoideum (Social amoeba)).